Here is a 274-residue protein sequence, read N- to C-terminus: tRNA-cytidine(32) 2-sulfurtransferase (274 aa).

The PP-loop motif signature appears at 40 to 45 (SGGKDS). C115, C118, and C206 together coordinate [4Fe-4S] cluster.

It belongs to the TtcA family. Homodimer. It depends on Mg(2+) as a cofactor. [4Fe-4S] cluster serves as cofactor.

The protein localises to the cytoplasm. The catalysed reaction is cytidine(32) in tRNA + S-sulfanyl-L-cysteinyl-[cysteine desulfurase] + AH2 + ATP = 2-thiocytidine(32) in tRNA + L-cysteinyl-[cysteine desulfurase] + A + AMP + diphosphate + H(+). It functions in the pathway tRNA modification. Functionally, catalyzes the ATP-dependent 2-thiolation of cytidine in position 32 of tRNA, to form 2-thiocytidine (s(2)C32). The sulfur atoms are provided by the cysteine/cysteine desulfurase (IscS) system. The sequence is that of tRNA-cytidine(32) 2-sulfurtransferase from Pseudomonas putida (strain ATCC 700007 / DSM 6899 / JCM 31910 / BCRC 17059 / LMG 24140 / F1).